The chain runs to 366 residues: Chorismate synthase (366 aa).

2 residues coordinate NADP(+): R48 and R54. Residues 125 to 127 (RSS), 238 to 239 (NA), G278, 293 to 297 (KPTSS), and R319 each bind FMN.

It belongs to the chorismate synthase family. As to quaternary structure, homotetramer. The cofactor is FMNH2.

It carries out the reaction 5-O-(1-carboxyvinyl)-3-phosphoshikimate = chorismate + phosphate. It functions in the pathway metabolic intermediate biosynthesis; chorismate biosynthesis; chorismate from D-erythrose 4-phosphate and phosphoenolpyruvate: step 7/7. Catalyzes the anti-1,4-elimination of the C-3 phosphate and the C-6 proR hydrogen from 5-enolpyruvylshikimate-3-phosphate (EPSP) to yield chorismate, which is the branch point compound that serves as the starting substrate for the three terminal pathways of aromatic amino acid biosynthesis. This reaction introduces a second double bond into the aromatic ring system. The protein is Chorismate synthase of Laribacter hongkongensis (strain HLHK9).